Here is a 671-residue protein sequence, read N- to C-terminus: DNA ligase (671 aa).

NAD(+)-binding positions include 32–36 (DAEYD), 81–82 (SL), and Glu113. The active-site N6-AMP-lysine intermediate is Lys115. Positions 136, 173, 290, and 314 each coordinate NAD(+). Residues Cys408, Cys411, Cys426, and Cys432 each contribute to the Zn(2+) site. Residues 593–671 (EIDSPFAGKT…EAEMIRLLGA (79 aa)) enclose the BRCT domain.

It belongs to the NAD-dependent DNA ligase family. LigA subfamily. Mg(2+) is required as a cofactor. It depends on Mn(2+) as a cofactor.

It carries out the reaction NAD(+) + (deoxyribonucleotide)n-3'-hydroxyl + 5'-phospho-(deoxyribonucleotide)m = (deoxyribonucleotide)n+m + AMP + beta-nicotinamide D-nucleotide.. DNA ligase that catalyzes the formation of phosphodiester linkages between 5'-phosphoryl and 3'-hydroxyl groups in double-stranded DNA using NAD as a coenzyme and as the energy source for the reaction. It is essential for DNA replication and repair of damaged DNA. This chain is DNA ligase, found in Salmonella typhimurium (strain LT2 / SGSC1412 / ATCC 700720).